We begin with the raw amino-acid sequence, 435 residues long: 3-ketoacyl-CoA thiolase (435 aa).

Residue cysteine 98 is the Acyl-thioester intermediate of the active site. Active-site proton acceptor residues include histidine 391 and cysteine 421.

It belongs to the thiolase-like superfamily. Thiolase family. As to quaternary structure, heterotetramer of two alpha chains (FadJ) and two beta chains (FadI).

The protein localises to the cytoplasm. The enzyme catalyses an acyl-CoA + acetyl-CoA = a 3-oxoacyl-CoA + CoA. The protein operates within lipid metabolism; fatty acid beta-oxidation. Functionally, catalyzes the final step of fatty acid oxidation in which acetyl-CoA is released and the CoA ester of a fatty acid two carbons shorter is formed. This chain is 3-ketoacyl-CoA thiolase, found in Vibrio vulnificus (strain CMCP6).